A 363-amino-acid polypeptide reads, in one-letter code: Dihydroorotate dehydrogenase (quinone) (363 aa).

FMN contacts are provided by residues 62-66 (AGYDK) and Thr86. Residue Lys66 coordinates substrate. 111–115 (NRLGF) provides a ligand contact to substrate. FMN-binding residues include Asn140 and Asn171. Substrate is bound at residue Asn171. The active-site Nucleophile is Ser174. Substrate is bound at residue Asn176. FMN is bound by residues Lys216 and Ser244. Position 245-246 (245-246 (NT)) interacts with substrate. FMN-binding positions include Gly267, Gly296, and 317-318 (YS).

This sequence belongs to the dihydroorotate dehydrogenase family. Type 2 subfamily. As to quaternary structure, monomer. The cofactor is FMN.

It is found in the cell membrane. It catalyses the reaction (S)-dihydroorotate + a quinone = orotate + a quinol. It functions in the pathway pyrimidine metabolism; UMP biosynthesis via de novo pathway; orotate from (S)-dihydroorotate (quinone route): step 1/1. Functionally, catalyzes the conversion of dihydroorotate to orotate with quinone as electron acceptor. In Allorhizobium ampelinum (strain ATCC BAA-846 / DSM 112012 / S4) (Agrobacterium vitis (strain S4)), this protein is Dihydroorotate dehydrogenase (quinone).